The sequence spans 209 residues: ATP phosphoribosyltransferase (209 aa).

The protein belongs to the ATP phosphoribosyltransferase family. Short subfamily. As to quaternary structure, heteromultimer composed of HisG and HisZ subunits.

It is found in the cytoplasm. The catalysed reaction is 1-(5-phospho-beta-D-ribosyl)-ATP + diphosphate = 5-phospho-alpha-D-ribose 1-diphosphate + ATP. It participates in amino-acid biosynthesis; L-histidine biosynthesis; L-histidine from 5-phospho-alpha-D-ribose 1-diphosphate: step 1/9. Its function is as follows. Catalyzes the condensation of ATP and 5-phosphoribose 1-diphosphate to form N'-(5'-phosphoribosyl)-ATP (PR-ATP). Has a crucial role in the pathway because the rate of histidine biosynthesis seems to be controlled primarily by regulation of HisG enzymatic activity. The polypeptide is ATP phosphoribosyltransferase (Caldicellulosiruptor saccharolyticus (strain ATCC 43494 / DSM 8903 / Tp8T 6331)).